A 172-amino-acid chain; its full sequence is NAD(P)H-quinone oxidoreductase subunit I, chloroplastic (172 aa).

4Fe-4S ferredoxin-type domains follow at residues 55 to 84 and 95 to 124; these read GRIHFEFDKCIACEVCVRVCPIDLPVVDWK and LNYSIDFGICIFCGNCVEYCPTNCLSMTEE. Cysteine 64, cysteine 67, cysteine 70, cysteine 74, cysteine 104, cysteine 107, cysteine 110, and cysteine 114 together coordinate [4Fe-4S] cluster.

It belongs to the complex I 23 kDa subunit family. As to quaternary structure, NDH is composed of at least 16 different subunits, 5 of which are encoded in the nucleus. [4Fe-4S] cluster is required as a cofactor.

The protein localises to the plastid. Its subcellular location is the chloroplast thylakoid membrane. It carries out the reaction a plastoquinone + NADH + (n+1) H(+)(in) = a plastoquinol + NAD(+) + n H(+)(out). It catalyses the reaction a plastoquinone + NADPH + (n+1) H(+)(in) = a plastoquinol + NADP(+) + n H(+)(out). Its function is as follows. NDH shuttles electrons from NAD(P)H:plastoquinone, via FMN and iron-sulfur (Fe-S) centers, to quinones in the photosynthetic chain and possibly in a chloroplast respiratory chain. The immediate electron acceptor for the enzyme in this species is believed to be plastoquinone. Couples the redox reaction to proton translocation, and thus conserves the redox energy in a proton gradient. This is NAD(P)H-quinone oxidoreductase subunit I, chloroplastic from Crucihimalaya wallichii (Rock-cress).